A 275-amino-acid chain; its full sequence is WIMGHMVNAIEQVDEFLDLGANAIEFDVDFDDDGVAKYTHHGIPCDCGRLCTKYAVFTEYLDYVRQVTTPGDPKFRKELVLLALDLKLQRISSEKAYAAGVDVATKLLDHYWMRGWNGGRAYILLNIPLVEDYEFIRAFKDTLRKEGHEQYNAKVGINFTGNEDLDEIREVLEKLGEDEHIWQADGITSCFPRGTERLKKALEKRDTPGYKYISKVYAWTLVRSSIMRRSLRLGVDGVMSNYPDRVVKVLKEKEFSDKFRLATYADNPWEKFTPI.

The active site involves His-5. Mg(2+) is bound by residues Glu-25 and Asp-27. The Nucleophile role is filled by His-41. 2 disulfides stabilise this stretch: Cys-45–Cys-51 and Cys-47–Cys-190. Asp-85 lines the Mg(2+) pocket.

This sequence belongs to the arthropod phospholipase D family. Class II subfamily. Mg(2+) is required as a cofactor. Expressed by the venom gland.

It is found in the secreted. It carries out the reaction an N-(acyl)-sphingosylphosphocholine = an N-(acyl)-sphingosyl-1,3-cyclic phosphate + choline. It catalyses the reaction an N-(acyl)-sphingosylphosphoethanolamine = an N-(acyl)-sphingosyl-1,3-cyclic phosphate + ethanolamine. The catalysed reaction is a 1-acyl-sn-glycero-3-phosphocholine = a 1-acyl-sn-glycero-2,3-cyclic phosphate + choline. The enzyme catalyses a 1-acyl-sn-glycero-3-phosphoethanolamine = a 1-acyl-sn-glycero-2,3-cyclic phosphate + ethanolamine. Dermonecrotic toxins cleave the phosphodiester linkage between the phosphate and headgroup of certain phospholipids (sphingolipid and lysolipid substrates), forming an alcohol (often choline) and a cyclic phosphate. This toxin acts on sphingomyelin (SM). It may also act on ceramide phosphoethanolamine (CPE), lysophosphatidylcholine (LPC) and lysophosphatidylethanolamine (LPE), but not on lysophosphatidylserine (LPS), and lysophosphatidylglycerol (LPG). It acts by transphosphatidylation, releasing exclusively cyclic phosphate products as second products. Induces dermonecrosis, hemolysis, increased vascular permeability, edema, inflammatory response, and platelet aggregation. The chain is Dermonecrotic toxin SpeSicTox-betaIIA2ii from Sicarius peruensis (Six-eyed sand spider).